The primary structure comprises 327 residues: MVKKIGVLTSGGDAPGMNAAIRGVVRAALSAGLDVFGIEDGYLGLYENRMKKLDRYSVSDMINRGGTFLGSARFPEFRDPEVRKVALKNMHERGIDGLVVIGGDGSYAGADLLTKEGGIHCVGLPGTIDNDVAGTDYTIGFFTALETVVEAIDRLRDTSSSHQRISIVEVMGRYCGDLTLAAAIAGGCEFIAIPEVEFKRDDLVAEIKAGIAKGKKHAIVAITEKLDDIDSLAKYIEKETGRETRGTVLGHIQRGGAPVAYDRILASRMGSYAVDLLLQDHDYKKGGFCVGVQNEKMVHELISVCIAPENKKSKFKEDWYDTAKKLF.

G12 lines the ATP pocket. ADP is bound by residues 22–26 (RGVVR) and 55–60 (RYSVSD). Residues 73-74 (RF) and 103-106 (GDGS) contribute to the ATP site. D104 is a binding site for Mg(2+). 127–129 (TID) contributes to the substrate binding site. The Proton acceptor role is filled by D129. R156 is a binding site for ADP. Substrate-binding positions include R164 and 171–173 (MGR). Residues 187 to 189 (GCE), K213, and 215 to 217 (KKH) each bind ADP. Substrate-binding positions include E224, R245, and 251 to 254 (HIQR).

This sequence belongs to the phosphofructokinase type A (PFKA) family. ATP-dependent PFK group I subfamily. Prokaryotic clade 'B1' sub-subfamily. Homotetramer. Mg(2+) serves as cofactor.

Its subcellular location is the cytoplasm. The catalysed reaction is beta-D-fructose 6-phosphate + ATP = beta-D-fructose 1,6-bisphosphate + ADP + H(+). It functions in the pathway carbohydrate degradation; glycolysis; D-glyceraldehyde 3-phosphate and glycerone phosphate from D-glucose: step 3/4. Allosterically activated by ADP and other diphosphonucleosides, and allosterically inhibited by phosphoenolpyruvate. Its function is as follows. Catalyzes the phosphorylation of D-fructose 6-phosphate to fructose 1,6-bisphosphate by ATP, the first committing step of glycolysis. The polypeptide is ATP-dependent 6-phosphofructokinase (Yersinia pseudotuberculosis serotype IB (strain PB1/+)).